Reading from the N-terminus, the 664-residue chain is Alkaline/neutral invertase C, mitochondrial (664 aa).

Phosphoserine is present on residues Ser-41, Ser-125, and Ser-657.

The protein belongs to the glycosyl hydrolase 100 family. In terms of tissue distribution, expressed in seedlings, roots and flowers.

It localises to the mitochondrion. The catalysed reaction is Hydrolysis of terminal non-reducing beta-D-fructofuranoside residues in beta-D-fructofuranosides.. Its function is as follows. Mitochondrial invertase that cleaves sucrose into glucose and fructose and is involved in the regulation of aerial tissue development and floral transition. May be modulating hormone balance in relation to the radicle emergence. This Arabidopsis thaliana (Mouse-ear cress) protein is Alkaline/neutral invertase C, mitochondrial.